The sequence spans 845 residues: Translation initiation factor IF-2 (845 aa).

2 disordered regions span residues 45-91 and 127-209; these read RRKI…SNLS and EESL…TPKV. Residues 81–91 are compositionally biased toward polar residues; that stretch reads SESSMAKSNLS. The span at 137-149 shows a compositional bias: basic and acidic residues; sequence TEIHQEEQKEEKN. Residues 151–162 show a composition bias toward polar residues; the sequence is PVQTSPLSSAHS. A compositionally biased stretch (basic and acidic residues) spans 179–193; that stretch reads TEKRKADEIKNDDRH. The 170-residue stretch at 343–512 folds into the tr-type G domain; it reads PRPPVVTIMG…LLQAELLDLK (170 aa). Positions 352-359 are G1; that stretch reads GHVDHGKT. 352 to 359 contacts GTP; that stretch reads GHVDHGKT. The interval 377 to 381 is G2; that stretch reads GITQH. Positions 398 to 401 are G3; it reads DTPG. GTP is bound by residues 398-402 and 452-455; these read DTPGH and NKID. A G4 region spans residues 452 to 455; the sequence is NKID. A G5 region spans residues 488-490; that stretch reads SAK.

Belongs to the TRAFAC class translation factor GTPase superfamily. Classic translation factor GTPase family. IF-2 subfamily.

The protein resides in the cytoplasm. One of the essential components for the initiation of protein synthesis. Protects formylmethionyl-tRNA from spontaneous hydrolysis and promotes its binding to the 30S ribosomal subunits. Also involved in the hydrolysis of GTP during the formation of the 70S ribosomal complex. This is Translation initiation factor IF-2 from Bartonella quintana (strain Toulouse) (Rochalimaea quintana).